We begin with the raw amino-acid sequence, 37 residues long: Mu-agatoxin-Aa1e (37 aa).

4 cysteine pairs are disulfide-bonded: Cys2–Cys18, Cys9–Cys23, Cys17–Cys33, and Cys25–Cys31. At Asn37 the chain carries Asparagine amide.

Belongs to the neurotoxin 07 (Beta/delta-agtx) family. 03 (aga-4) subfamily. Aga sub-subfamily. As to expression, expressed by the venom gland.

The protein resides in the secreted. In terms of biological role, insecticidal neurotoxin that induces an irreversible spastic paralysis when injected into insects. Modifies presynaptic voltage-gated sodium channels (Nav), causing them to open at the normal resting potential of the nerve. This leads to spontaneous release of neurotransmitter and repetitive action potentials in motor neurons. This is Mu-agatoxin-Aa1e from Agelenopsis aperta (North American funnel-web spider).